We begin with the raw amino-acid sequence, 224 residues long: PKHD-type hydroxylase Shewmr4_3244 (224 aa).

The region spanning 78–176 is the Fe2OG dioxygenase domain; the sequence is QFYPPLFNRY…RTAAFMWLQS (99 aa). Residues His-96, Asp-98, and His-157 each coordinate Fe cation. Arg-167 lines the 2-oxoglutarate pocket.

The cofactor is Fe(2+). L-ascorbate serves as cofactor.

In Shewanella sp. (strain MR-4), this protein is PKHD-type hydroxylase Shewmr4_3244.